The sequence spans 385 residues: MVRFTSFTSPFSAILLLSFGINKVATASTNTCVVAKSDSDDAITILEAFEKCKTGGTVVFPKDSTYNLNSIVTTSGLKNVNINLAGTINLPVREESYRNGDYYIQIKGTNIKMYGGGTINGNGQAWWDALDRTAPSVLRIAANDSSFGNFNIINSPRAHLNVTNSTNLLLHDFIIHTVSNNSNPAKNTDALDLYHSSGVIFRDSDLTIGDDCLAVKENVTKVTVSNITCRGGHGYSIGSLGMGGRRDFVTQVNVYNSTCIDCQNGVRVKTWAGGKGFVEDINFTDIYLEKAENPIIITTHYCDKNEMGYCNNNYETSLDIAGVHFKNIHGSGSDKGKPIINLNCSTESPCSDVTLTNINISKASNNTKNVCVNLKGSDKIPECSS.

An N-terminal signal peptide occupies residues 1 to 26; that stretch reads MVRFTSFTSPFSAILLLSFGINKVAT. Residues Asn-143, Asn-161, Asn-164, and Asn-180 are each glycosylated (N-linked (GlcNAc...) asparagine). A PbH1 1 repeat occupies 165–195; the sequence is STNLLLHDFIIHTVSNNSNPAKNTDALDLYH. Asp-210 functions as the Proton donor in the catalytic mechanism. Cysteines 212 and 229 form a disulfide. N-linked (GlcNAc...) asparagine glycosylation is found at Asn-218 and Asn-226. PbH1 repeat units follow at residues 219-241, 249-270, and 278-299; these read VTKVTVSNITCRGGHGYSIGSLG, VTQVNVYNSTCIDCQNGVRVKT, and VEDINFTDIYLEKAENPIIITT. The active site involves His-233. Asn-256, Asn-282, and Asn-343 each carry an N-linked (GlcNAc...) asparagine glycan. Cys-344 and Cys-350 are disulfide-bonded. Residues 350–376 form a PbH1 5 repeat; that stretch reads CSDVTLTNINISKASNNTKNVCVNLKG. N-linked (GlcNAc...) asparagine glycans are attached at residues Asn-359 and Asn-365.

This sequence belongs to the glycosyl hydrolase 28 family. In terms of processing, N-glycosylated.

It localises to the secreted. It catalyses the reaction [(1-&gt;4)-alpha-D-galacturonosyl](n) + H2O = alpha-D-galacturonate + [(1-&gt;4)-alpha-D-galacturonosyl](n-1). Specific in hydrolyzing the terminal glycosidic bond of polygalacturonic acid and oligogalacturonates. This is Exopolygalacturonase rpg16 from Rhizopus delemar (strain RA 99-880 / ATCC MYA-4621 / FGSC 9543 / NRRL 43880) (Mucormycosis agent).